The primary structure comprises 411 residues: Serine hydroxymethyltransferase (411 aa).

(6S)-5,6,7,8-tetrahydrofolate is bound by residues Leu-119 and 123–125 (GHL). Position 228 is an N6-(pyridoxal phosphate)lysine (Lys-228).

This sequence belongs to the SHMT family. In terms of assembly, homodimer. Pyridoxal 5'-phosphate is required as a cofactor.

The protein localises to the cytoplasm. It catalyses the reaction (6R)-5,10-methylene-5,6,7,8-tetrahydrofolate + glycine + H2O = (6S)-5,6,7,8-tetrahydrofolate + L-serine. Its pathway is one-carbon metabolism; tetrahydrofolate interconversion. The protein operates within amino-acid biosynthesis; glycine biosynthesis; glycine from L-serine: step 1/1. Catalyzes the reversible interconversion of serine and glycine with tetrahydrofolate (THF) serving as the one-carbon carrier. This reaction serves as the major source of one-carbon groups required for the biosynthesis of purines, thymidylate, methionine, and other important biomolecules. Also exhibits THF-independent aldolase activity toward beta-hydroxyamino acids, producing glycine and aldehydes, via a retro-aldol mechanism. This Clostridium kluyveri (strain NBRC 12016) protein is Serine hydroxymethyltransferase.